Consider the following 489-residue polypeptide: COX3 mRNA-specific translational activator PET494 (489 aa).

Its subcellular location is the mitochondrion inner membrane. Required for the expression of the mitochondrial gene for cytochrome c oxidase subunit III (COX3). The protein is COX3 mRNA-specific translational activator PET494 (PET494) of Saccharomyces cerevisiae (strain ATCC 204508 / S288c) (Baker's yeast).